The chain runs to 73 residues: Tetrahydromethanopterin S-methyltransferase subunit G (73 aa).

Residues 48–68 (IGILYGAVVGLLLFLIYVSVS) form a helical membrane-spanning segment.

It belongs to the MtrG family. As to quaternary structure, the complex is composed of 8 subunits; MtrA, MtrB, MtrC, MtrD, MtrE, MtrF, MtrG and MtrH.

It is found in the cell membrane. It carries out the reaction 5-methyl-5,6,7,8-tetrahydromethanopterin + coenzyme M + 2 Na(+)(in) = 5,6,7,8-tetrahydromethanopterin + methyl-coenzyme M + 2 Na(+)(out). It participates in one-carbon metabolism; methanogenesis from CO(2); methyl-coenzyme M from 5,10-methylene-5,6,7,8-tetrahydromethanopterin: step 2/2. Its function is as follows. Part of a complex that catalyzes the formation of methyl-coenzyme M and tetrahydromethanopterin from coenzyme M and methyl-tetrahydromethanopterin. This is an energy-conserving, sodium-ion translocating step. The chain is Tetrahydromethanopterin S-methyltransferase subunit G from Methanosarcina acetivorans (strain ATCC 35395 / DSM 2834 / JCM 12185 / C2A).